A 235-amino-acid polypeptide reads, in one-letter code: Casparian strip membrane protein 2 (235 aa).

Residues Met-1–Cys-70 lie on the Cytoplasmic side of the membrane. Residues Leu-71 to Ile-91 traverse the membrane as a helical segment. Residues Ser-92–Ala-118 are Extracellular-facing. The helical transmembrane segment at Phe-119–Phe-139 threads the bilayer. The Cytoplasmic portion of the chain corresponds to Ser-140–Asp-162. The chain crosses the membrane as a helical span at residues Val-163–Ala-183. The Extracellular portion of the chain corresponds to His-184–Val-210. Residues Val-211 to Ile-231 traverse the membrane as a helical segment. At Arg-232 to Lys-235 the chain is on the cytoplasmic side.

The protein belongs to the Casparian strip membrane proteins (CASP) family. Homodimer and heterodimers.

Its subcellular location is the cell membrane. In terms of biological role, regulates membrane-cell wall junctions and localized cell wall deposition. Required for establishment of the Casparian strip membrane domain (CSD) and the subsequent formation of Casparian strips, a cell wall modification of the root endodermis that determines an apoplastic barrier between the intraorganismal apoplasm and the extraorganismal apoplasm and prevents lateral diffusion. The sequence is that of Casparian strip membrane protein 2 from Sorghum bicolor (Sorghum).